Reading from the N-terminus, the 84-residue chain is FMRFamide-like neuropeptides 26 (84 aa).

The signal sequence occupies residues 1 to 19 (MKVMFMLALLFSSLVATSA). Residues 20–48 (FRLPFQFFGANEDFNSGLTKRNYYESKPY) constitute a propeptide that is removed on maturation. Phe61 and Phe82 each carry phenylalanine amide.

This sequence belongs to the FARP (FMRFamide related peptide) family. As to expression, each flp gene is expressed in a distinct set of neurons.

The protein localises to the secreted. In terms of biological role, FMRFamides and FMRFamide-like peptides are neuropeptides. The sequence is that of FMRFamide-like neuropeptides 26 from Caenorhabditis elegans.